A 515-amino-acid chain; its full sequence is Bifunctional pantoate ligase/cytidylate kinase (515 aa).

Positions 1-279 (MKVVETVARL…VGSTRLIDNV (279 aa)) are pantoate--beta-alanine ligase. Position 31 to 38 (31 to 38 (MGALHEGH)) interacts with ATP. Histidine 38 serves as the catalytic Proton donor. (R)-pantoate is bound at residue glutamine 62. Position 62 (glutamine 62) interacts with beta-alanine. An ATP-binding site is contributed by 149–152 (GQKD). A (R)-pantoate-binding site is contributed by glutamine 155. Residues valine 178 and 186-189 (LSSR) contribute to the ATP site. A cytidylate kinase region spans residues 280-515 (VLGQHHERRP…LYRDKVGGSV (236 aa)).

The protein in the N-terminal section; belongs to the pantothenate synthetase family. It in the C-terminal section; belongs to the cytidylate kinase family. Type 1 subfamily.

The protein localises to the cytoplasm. The catalysed reaction is (R)-pantoate + beta-alanine + ATP = (R)-pantothenate + AMP + diphosphate + H(+). It catalyses the reaction CMP + ATP = CDP + ADP. It carries out the reaction dCMP + ATP = dCDP + ADP. The protein operates within cofactor biosynthesis; (R)-pantothenate biosynthesis; (R)-pantothenate from (R)-pantoate and beta-alanine: step 1/1. Functionally, catalyzes the condensation of pantoate with beta-alanine in an ATP-dependent reaction via a pantoyl-adenylate intermediate. Its function is as follows. Catalyzes the transfer of a phosphate group from ATP to either CMP or dCMP to form CDP or dCDP and ADP, respectively. In Gloeobacter violaceus (strain ATCC 29082 / PCC 7421), this protein is Bifunctional pantoate ligase/cytidylate kinase.